The primary structure comprises 398 residues: Phosphoglycerate kinase (398 aa).

Residues 23-25 (DLN), R38, 61-64 (HFGR), R120, and R153 each bind substrate. Residues K203, E325, and 355–358 (GGDT) contribute to the ATP site.

This sequence belongs to the phosphoglycerate kinase family. As to quaternary structure, monomer.

The protein resides in the cytoplasm. The enzyme catalyses (2R)-3-phosphoglycerate + ATP = (2R)-3-phospho-glyceroyl phosphate + ADP. Its pathway is carbohydrate degradation; glycolysis; pyruvate from D-glyceraldehyde 3-phosphate: step 2/5. The sequence is that of Phosphoglycerate kinase from Chelativorans sp. (strain BNC1).